The chain runs to 465 residues: Iron-sulfur cluster assembly SufBD family protein SSP1857 (465 aa).

It belongs to the iron-sulfur cluster assembly SufBD family.

This is Iron-sulfur cluster assembly SufBD family protein SSP1857 from Staphylococcus saprophyticus subsp. saprophyticus (strain ATCC 15305 / DSM 20229 / NCIMB 8711 / NCTC 7292 / S-41).